Consider the following 678-residue polypeptide: DNA ligase (678 aa).

Residues 47-51 (DSDYD), 96-97 (SL), and E122 each bind NAD(+). K124 functions as the N6-AMP-lysine intermediate in the catalytic mechanism. NAD(+) is bound by residues R145, E182, K300, and K324. 4 residues coordinate Zn(2+): C418, C421, C436, and C442. Residues 602–678 (AYNESFTGKT…ILEDNLKDLL (77 aa)) enclose the BRCT domain.

It belongs to the NAD-dependent DNA ligase family. LigA subfamily. Requires Mg(2+) as cofactor. Mn(2+) is required as a cofactor.

It carries out the reaction NAD(+) + (deoxyribonucleotide)n-3'-hydroxyl + 5'-phospho-(deoxyribonucleotide)m = (deoxyribonucleotide)n+m + AMP + beta-nicotinamide D-nucleotide.. DNA ligase that catalyzes the formation of phosphodiester linkages between 5'-phosphoryl and 3'-hydroxyl groups in double-stranded DNA using NAD as a coenzyme and as the energy source for the reaction. It is essential for DNA replication and repair of damaged DNA. This chain is DNA ligase, found in Francisella tularensis subsp. holarctica (strain FTNF002-00 / FTA).